Here is a 1458-residue protein sequence, read N- to C-terminus: Probable serine/threonine-protein kinase yakA (1458 aa).

Residues 32-76 (NNSLNSNDNTNTTNNNNNNNNNNNNNNNNNNNNNNNNNINNNNNN) show a composition bias toward low complexity. The tract at residues 32 to 83 (NNSLNSNDNTNTTNNNNNNNNNNNNNNNNNNNNNNNNNINNNNNNGGMVGVN) is disordered. Positions 205-548 (YKVLDSLGQG…PMQAKEHPFI (344 aa)) constitute a Protein kinase domain. ATP is bound by residues 211–219 (LGQGTFGQV) and K234. D332 (proton acceptor) is an active-site residue. 2 disordered regions span residues 441-462 (HRHL…NGKP) and 545-571 (HPFI…TYSQ). Positions 446–459 (SNSDDNNNNNNNNN) are enriched in low complexity. The stretch at 588–643 (NQHQLFQQLQQQQQQQQQQQQQQQQQQQQQQQQQQQQQQHNQFQQQQQQQQQQQQS) forms a coiled coil. Low complexity-rich tracts occupy residues 659 to 709 (TPYT…SFNF), 791 to 800 (SWGSDSSSIS), 808 to 853 (QKQM…NNVN), and 861 to 870 (DIPSDSFSSS). Disordered stretches follow at residues 659 to 714 (TPYT…NESF) and 791 to 874 (SWGS…EGMD). Positions 878-927 (NLYQQQQQQQQQQQQQQQQQQQQQQQQQQQQQQQQQQLQYQQQFQTLQDL) form a coiled coil. 5 disordered regions span residues 930–1095 (EGEK…PQMI), 1128–1161 (NQQN…GGAI), 1233–1347 (DYRP…SYQY), 1375–1399 (QQQQ…KTSS), and 1435–1458 (QQLQ…YRET). Low complexity-rich tracts occupy residues 961 to 988 (QQTN…QQQQ), 1016 to 1042 (QQFQ…RFMQ), and 1064 to 1093 (QPLH…FTPQ). 2 stretches are compositionally biased toward polar residues: residues 1128–1158 (NQQN…NSSG) and 1233–1245 (DYRP…QSPP). Composition is skewed to low complexity over residues 1246–1255 (SSYNSNKSFY) and 1264–1279 (NNNN…NFSN). Residues 1280–1291 (SLLPSQQQNVIF) are compositionally biased toward polar residues. Over residues 1292-1309 (PQNSPPSSYNSSNSLSKS) the composition is skewed to low complexity. 2 stretches are compositionally biased toward polar residues: residues 1310–1321 (GGNTVKNNSNTG) and 1331–1344 (QRFN…SGGS). Coiled-coil stretches lie at residues 1346 to 1383 (QYQQ…KKDT) and 1409 to 1442 (RYQY…QQQA).

This sequence belongs to the protein kinase superfamily. CMGC Ser/Thr protein kinase family. MNB/DYRK subfamily.

It localises to the cytoplasm. It carries out the reaction L-seryl-[protein] + ATP = O-phospho-L-seryl-[protein] + ADP + H(+). It catalyses the reaction L-threonyl-[protein] + ATP = O-phospho-L-threonyl-[protein] + ADP + H(+). The catalysed reaction is L-tyrosyl-[protein] + ATP = O-phospho-L-tyrosyl-[protein] + ADP + H(+). In terms of biological role, general sensor of environmental conditions, such as heat stress, effecting changes through pkaC. Essential for survival to nitrosoative and oxidative stresses. Required for cell cycle control, not only at the onset but also during development (aggregation process and postaggregative development). The polypeptide is Probable serine/threonine-protein kinase yakA (yakA) (Dictyostelium discoideum (Social amoeba)).